A 102-amino-acid polypeptide reads, in one-letter code: Large ribosomal subunit protein bL21 (102 aa).

Belongs to the bacterial ribosomal protein bL21 family. As to quaternary structure, part of the 50S ribosomal subunit. Contacts protein L20.

Its function is as follows. This protein binds to 23S rRNA in the presence of protein L20. This chain is Large ribosomal subunit protein bL21, found in Bacillus subtilis (strain 168).